We begin with the raw amino-acid sequence, 135 residues long: Nitrogen fixation protein NifU 1 (135 aa).

The segment covering 1–10 (MRDMQDDDTK) has biased composition (basic and acidic residues). The disordered stretch occupies residues 1–29 (MRDMQDDDTKSPAPPPAAAAAARRAAGQA). Low complexity predominate over residues 18–29 (AAAAARRAAGQA).

It belongs to the NifU family.

In terms of biological role, may be involved in the formation or repair of [Fe-S] clusters present in iron-sulfur proteins. The polypeptide is Nitrogen fixation protein NifU 1 (nifU1) (Rhodobacter capsulatus (Rhodopseudomonas capsulata)).